A 519-amino-acid polypeptide reads, in one-letter code: Cyclic AMP-responsive element-binding protein 3-like protein 1 (519 aa).

The segment at 1-60 is required for transcription activation; sequence MDAVLEPFPADRLFPGSSFLDLGDLNESDFLNNAHFPEHLDHFVENMEDFSNDLFSSFFD. Residues 1–376 are Cytoplasmic-facing; sequence MDAVLEPFPA…MAATQTGTCL (376 aa). A Glycyl lysine isopeptide (Lys-Gly) (interchain with G-Cter in SUMO2) cross-link involves residue lysine 184. Residues 200–259 are disordered; that stretch reads DLVQMPPTPPSSHGSDSDGSQSPRSLPPSSPVRPMARSSTAISTSPLLTAPHKLQGTSGP. Residues 210–223 show a composition bias toward low complexity; it reads SSHGSDSDGSQSPR. Residues 236 to 246 are compositionally biased toward polar residues; that stretch reads RSSTAISTSPL. The bZIP domain maps to 290–353; sequence ALKRVRRKIK…RTLLQQLQKL (64 aa). Residues 292 to 321 are basic motif; sequence KRVRRKIKNKISAQESRRKKKEYVECLEKK. Residues 332–353 form a leucine-zipper region; the sequence is LWKKVETLETANRTLLQQLQKL. A helical; Signal-anchor for type II membrane protein membrane pass occupies residues 377-397; it reads MVAALCFVLVLGSLVPCLPAF. Residues 392–395 carry the S2P recognition motif; that stretch reads PCLP. The Lumenal segment spans residues 398-519; the sequence is SSGSMTVKED…LGPNTTIKLS (122 aa). Residues 423–426 carry the S1P recognition motif; that stretch reads RSLL. Positions 449 to 519 are disordered; sequence EGWELKPGGP…LGPNTTIKLS (71 aa). Residues 462–486 show a composition bias toward basic and acidic residues; the sequence is RPQDHLRHDRADSIHETTKYLRETW. Residues asparagine 493, asparagine 498, and asparagine 513 are each glycosylated (N-linked (GlcNAc...) asparagine).

The protein belongs to the bZIP family. ATF subfamily. As to quaternary structure, interacts with SMAD4, the interaction takes place upon TGFB1 induction and SMAD4 acts as a CREB3L1 coactivator to induce the expression of genes involved in assembly of collagen extracellular matrix. Post-translationally, N-glycosylated. In terms of processing, ubiquitinated by HRD1/SYVN1; undergoes 'Lys-48'-linked ubiquitination, followed by rapid proteasomal degradation under normal conditions. Upon ER stress, SYVN1 E3 ubiquitin-protein ligase dissociates from its substrate, ubiquitination does not occur and CREB3L1 is stabilized. Upon ER stress or DNA damage, translocated to the Golgi apparatus, where it is processed by regulated intramembrane proteolysis (RIP) to release the cytosol-facing N-terminal transcription factor domain. The cleavage is performed sequentially by site-1 and site-2 proteases (S1P/MBTPS1 and S2P/MBTPS2). RIP is induced by TGFB1 and ceramide. In terms of tissue distribution, expressed in cortical and trabecular bones. Highly expressed in osteoblasts, but not detected in osteoclasts, nor in macrophages. Expressed at relatively low levels in lung and kidney. Weakly expressed in brain and spleen. Expressed in astrocytes.

The protein localises to the endoplasmic reticulum membrane. It localises to the nucleus. Functionally, precursor of the transcription factor form (Processed cyclic AMP-responsive element-binding protein 3-like protein 1), which is embedded in the endoplasmic reticulum membrane with N-terminal DNA-binding and transcription activation domains oriented toward the cytosolic face of the membrane. In response to ER stress or DNA damage, transported to the Golgi, where it is cleaved in a site-specific manner by resident proteases S1P/MBTPS1 and S2P/MBTPS2. The released N-terminal cytosolic domain is translocated to the nucleus where it activates transcription of specific target genes involved in the cell-cycle progression inhibition. In terms of biological role, transcription factor involved in cell type specific DNA damage and unfolded protein response (UPR). Binds the DNA consensus sequence 5'-GTGXGCXGC-3'. Plays a critical role in bone formation through the transcription of COL1A1, and possibly COL1A2, and the secretion of bone matrix proteins. Directly binds to the UPR element (UPRE)-like sequence in an osteoblast-specific COL1A1 promoter region and induces its transcription. Does not regulate COL1A1 in other tissues, such as skin. Required to protect astrocytes from ER stress-induced cell death. In astrocytes, binds to the cAMP response element (CRE) of the BiP/HSPA5 promoter and participate in its transcriptional activation. In astrocytes and osteoblasts, upon DNA damage, inhibits cell-cycle progression after G2/M phase by binding to promoters and activating transcription of genes encoding cell-cycle inhibitors, such as p21/CDKN1A. Required for TGFB1 to activate genes involved in the assembly of collagen extracellular matrix. This Mus musculus (Mouse) protein is Cyclic AMP-responsive element-binding protein 3-like protein 1 (Creb3l1).